The sequence spans 308 residues: Ribosomal RNA large subunit methyltransferase F (308 aa).

It belongs to the methyltransferase superfamily. METTL16/RlmF family.

It is found in the cytoplasm. It carries out the reaction adenosine(1618) in 23S rRNA + S-adenosyl-L-methionine = N(6)-methyladenosine(1618) in 23S rRNA + S-adenosyl-L-homocysteine + H(+). Specifically methylates the adenine in position 1618 of 23S rRNA. In Shigella boydii serotype 18 (strain CDC 3083-94 / BS512), this protein is Ribosomal RNA large subunit methyltransferase F.